We begin with the raw amino-acid sequence, 374 residues long: Tomoregulin-2 (374 aa).

The N-terminal stretch at 1 to 40 is a signal peptide; the sequence is MVLWESPRQCSSWTLCEGFCWLLLLPVTLLIIARPVKLAA. Residues 41–320 lie on the Extracellular side of the membrane; sequence FPTSLSDCQT…VPGPVRFQYV (280 aa). The N-linked (GlcNAc...) asparagine glycan is linked to asparagine 55. Kazal-like domains lie at 90 to 137 and 181 to 229; these read VCQF…SCAT and VCNI…RCQD. Intrachain disulfides connect cysteine 91/cysteine 121, cysteine 95/cysteine 114, cysteine 103/cysteine 135, cysteine 182/cysteine 213, cysteine 186/cysteine 206, and cysteine 195/cysteine 227. An N-linked (GlcNAc...) asparagine glycan is attached at asparagine 230. One can recognise an EGF-like domain in the interval 261–301; that stretch reads HHIPCPEHYNGFCMHGKCEHSINMQEPSCRCDAGYTGQHCE. 3 disulfide bridges follow: cysteine 265/cysteine 278, cysteine 273/cysteine 289, and cysteine 291/cysteine 300. The segment at 303 to 320 is required for shedding; sequence KDYSVLYVVPGPVRFQYV. A helical membrane pass occupies residues 321–341; that stretch reads LIAAVIGTIQIAVICVVVLCI. Residues 342–374 are Cytoplasmic-facing; it reads TRKCPRSNRIHRQKQNTGHYSSDNTTRASTRLI. The segment at 353–374 is disordered; it reads RQKQNTGHYSSDNTTRASTRLI. A compositionally biased stretch (polar residues) spans 356-374; it reads QNTGHYSSDNTTRASTRLI.

Belongs to the tomoregulin family. O-glycosylated; contains chondroitin sulfate glycosaminoglycans. Post-translationally, a soluble form (TMEFF2-ECD) is produced by proteolytic shedding. This shedding can be induced by phorbol ester or pro-inflammatory cytokines such as TNFalpha, and is mediated by a metalloproteinase ADAM. Widely expressed in the brain. In the olfactory bulb expressed in mitral cell, granule, and glomerular layers. In the hippocampus expressed in hippocampal cornu ammonis, pyramidal layer, dentate gyrus, and substantia nigra pars compacta.

Its subcellular location is the membrane. May be a survival factor for hippocampal and mesencephalic neurons. The shedded form may up-regulate cell proliferation. The chain is Tomoregulin-2 (Tmeff2) from Mus musculus (Mouse).